Consider the following 392-residue polypeptide: MTLAAITYTRGSLSILNQLLLPHQTTYDPLHSACDAWHAIHEMRVRGAPAIAIVAALSLAVELDALAANNQLSPEPKEVEVFIREKLEYLVSSRPTAVNLAEAAGRLGGIVSAKAEVRGVDGREVAEAYIAAAQRMLEDDVKDNRAIGEFGARWVLENAVATGSESGSEKGKVAVLTHCNTGSLATAGYGTALGVIRSLHATGSLERAYCTETRPYNQGSRLTAYELVHDKIPATLITDNMAAALLARNRAGSAASVGVSAIIVGADRVAANGDTANKIGTYGLAVLAKYHGVKFLVAAPRTTIDMNTKTGADIVIEERPKQEVTRVRGPRAGEEVDGLRAMETITVAANGIDVWNPAFDVTPAALIDGIITEVGVVEKDASGAFHLARIFE.

The active-site Proton donor is the aspartate 267.

The protein belongs to the eIF-2B alpha/beta/delta subunits family. MtnA subfamily.

The protein resides in the cytoplasm. The protein localises to the nucleus. The enzyme catalyses 5-(methylsulfanyl)-alpha-D-ribose 1-phosphate = 5-(methylsulfanyl)-D-ribulose 1-phosphate. The protein operates within amino-acid biosynthesis; L-methionine biosynthesis via salvage pathway; L-methionine from S-methyl-5-thio-alpha-D-ribose 1-phosphate: step 1/6. Its function is as follows. Catalyzes the interconversion of methylthioribose-1-phosphate (MTR-1-P) into methylthioribulose-1-phosphate (MTRu-1-P). This Blastomyces gilchristii (strain SLH14081) (Blastomyces dermatitidis) protein is Methylthioribose-1-phosphate isomerase.